The chain runs to 194 residues: Fe/S biogenesis protein NfuA (194 aa).

Positions 152 and 155 each coordinate [4Fe-4S] cluster.

It belongs to the NfuA family. As to quaternary structure, homodimer. It depends on [4Fe-4S] cluster as a cofactor.

Its function is as follows. Involved in iron-sulfur cluster biogenesis. Binds a 4Fe-4S cluster, can transfer this cluster to apoproteins, and thereby intervenes in the maturation of Fe/S proteins. Could also act as a scaffold/chaperone for damaged Fe/S proteins. This Pseudomonas putida (strain ATCC 700007 / DSM 6899 / JCM 31910 / BCRC 17059 / LMG 24140 / F1) protein is Fe/S biogenesis protein NfuA.